Reading from the N-terminus, the 117-residue chain is UPF0102 protein Clos_1471 (117 aa).

Belongs to the UPF0102 family.

This Alkaliphilus oremlandii (strain OhILAs) (Clostridium oremlandii (strain OhILAs)) protein is UPF0102 protein Clos_1471.